We begin with the raw amino-acid sequence, 436 residues long: Zinc finger protein 101 (436 aa).

A KRAB domain is found at 4-82 (VAFEDVAVNF…RKEGNEHRET (79 aa)). Residues 102–124 (CKCSVCGKVFLRHSFLDRHMRAH) form a C2H2-type 1 zinc finger. Positions 128–141 (KRSECGGEWRETPR) are enriched in basic and acidic residues. A disordered region spans residues 128–164 (KRSECGGEWRETPRKQKQHGKASISPSSGARRTVTPT). Residues 151-163 (ISPSSGARRTVTP) show a composition bias toward polar residues. The segment at 169 to 191 (YECKVCGKAFNSPNLFQIHQRTH) adopts a C2H2-type 2 zinc-finger fold. The C2H2-type 3; degenerate zinc finger occupies 197 to 219 (YKCREIVRAFTVSSFFRKHGKMH). 7 consecutive C2H2-type zinc fingers follow at residues 225-247 (YECK…VRTH), 253-276 (YKCK…IRSH), 282-304 (HQCQ…ERTH), 310-332 (YECQ…ERAH), 338-360 (YECN…KKTH), 366-388 (YECT…EMTH), and 394-416 (FDCK…ERTH).

Belongs to the krueppel C2H2-type zinc-finger protein family. Expressed in a variety of adult and fetal tissues.

It is found in the nucleus. In terms of biological role, may be involved in transcriptional regulation. This is Zinc finger protein 101 (ZNF101) from Homo sapiens (Human).